Reading from the N-terminus, the 559-residue chain is Potassium-transporting ATPase potassium-binding subunit (559 aa).

The next 13 membrane-spanning stretches (helical) occupy residues 5–25 (GFLL…PLGS), 27–47 (LARL…RILW), 63–83 (LLAL…LLFW), 132–152 (GLTV…FALI), 170–190 (LVRI…LFFI), 253–273 (LAQM…FGEA), 283–303 (LLWA…WAEV), 327–347 (FGVL…CGAV), 356–376 (ALGG…FGGV), 379–399 (GLYG…LMIG), 416–436 (MTAL…ALAM), 484–504 (LLAF…MAIA), and 524–544 (GALF…LTFI).

It belongs to the KdpA family. As to quaternary structure, the system is composed of three essential subunits: KdpA, KdpB and KdpC.

The protein resides in the cell inner membrane. Part of the high-affinity ATP-driven potassium transport (or Kdp) system, which catalyzes the hydrolysis of ATP coupled with the electrogenic transport of potassium into the cytoplasm. This subunit binds the periplasmic potassium ions and delivers the ions to the membrane domain of KdpB through an intramembrane tunnel. The polypeptide is Potassium-transporting ATPase potassium-binding subunit (Salmonella heidelberg (strain SL476)).